The following is a 445-amino-acid chain: Glutamate--tRNA ligase 2 (445 aa).

Residues 10–20 (PSPTGRLHVGN) carry the 'HIGH' region motif. The short motif at 241–245 (ALSKR) is the 'KMSKS' region element. K244 is an ATP binding site.

It belongs to the class-I aminoacyl-tRNA synthetase family. Glutamate--tRNA ligase type 1 subfamily. As to quaternary structure, monomer.

The protein resides in the cytoplasm. It catalyses the reaction tRNA(Glu) + L-glutamate + ATP = L-glutamyl-tRNA(Glu) + AMP + diphosphate. Functionally, catalyzes the attachment of glutamate to tRNA(Glu) in a two-step reaction: glutamate is first activated by ATP to form Glu-AMP and then transferred to the acceptor end of tRNA(Glu). The sequence is that of Glutamate--tRNA ligase 2 from Hyphomonas neptunium (strain ATCC 15444).